Consider the following 943-residue polypeptide: Isoleucine--tRNA ligase (943 aa).

Positions 59–69 (PYANGQIHLGH) match the 'HIGH' region motif. Position 577 (Glu-577) interacts with L-isoleucyl-5'-AMP. Residues 618–622 (KMSKS) carry the 'KMSKS' region motif. Lys-621 lines the ATP pocket. Zn(2+)-binding residues include Cys-906, Cys-909, Cys-926, and Cys-929.

This sequence belongs to the class-I aminoacyl-tRNA synthetase family. IleS type 1 subfamily. Monomer. The cofactor is Zn(2+).

Its subcellular location is the cytoplasm. It catalyses the reaction tRNA(Ile) + L-isoleucine + ATP = L-isoleucyl-tRNA(Ile) + AMP + diphosphate. Catalyzes the attachment of isoleucine to tRNA(Ile). As IleRS can inadvertently accommodate and process structurally similar amino acids such as valine, to avoid such errors it has two additional distinct tRNA(Ile)-dependent editing activities. One activity is designated as 'pretransfer' editing and involves the hydrolysis of activated Val-AMP. The other activity is designated 'posttransfer' editing and involves deacylation of mischarged Val-tRNA(Ile). The chain is Isoleucine--tRNA ligase from Xanthomonas oryzae pv. oryzae (strain MAFF 311018).